We begin with the raw amino-acid sequence, 904 residues long: Anoctamin-5 (904 aa).

Residues 1 to 290 (MVEQEGLTAK…HLIRNYFGEK (290 aa)) are Cytoplasmic-facing. A helical membrane pass occupies residues 291–311 (IGIYFVFLGYYTEMLLFAALV). The Extracellular segment spans residues 312-371 (GLACFIYGLLSMENNRTSTEICDPDIGGQMIMCPLCDEVCDYWRLNTTCLHSKFSHLFDN). N-linked (GlcNAc...) asparagine glycosylation is found at Asn-326, Asn-357, and Asn-371. The helical transmembrane segment at 372 to 392 (ESTVFFALFMGIWVTLFLEFW) threads the bilayer. Topologically, residues 393 to 453 (KQRQARLEYE…CHRIPWYFVS (61 aa)) are cytoplasmic. The helical transmembrane segment at 454–474 (GTTVTFGMALLLSSMVSILIY) threads the bilayer. Residues 475-502 (RLSVFATFASFMESEATLQSVKSFFTPQ) lie on the Extracellular side of the membrane. A helical transmembrane segment spans residues 503–523 (LATALSGSCLNCIVILILNFF). The Cytoplasmic portion of the chain corresponds to 524-548 (YEKISAWITKMEIPRTHQEYESSLT). Residues 549-569 (LKMFLFQFVNYYSSCFYVAFF) traverse the membrane as a helical segment. Residues 570 to 667 (KGKFVGYPGS…RGLFYEYLET (98 aa)) are Extracellular-facing. A helical membrane pass occupies residues 668-688 (VIQFGFATLFVASFPLAPLFA). Residues 689 to 723 (LMNNIMGIRVDAWKLTTQYRRPVAAKAHSIGVWQD) are Cytoplasmic-facing. A helical transmembrane segment spans residues 724–744 (ILFGMAIVSVATNAFIVSFTS). At 745-825 (DIIPRLVYFY…FWHVLAAKMT (81 aa)) the chain is on the extracellular side. N-linked (GlcNAc...) asparagine glycans are attached at residues Asn-759, Asn-769, and Asn-782. Residues 826–846 (FIIVMEHVVFLFKFLLAWLIP) form a helical membrane-spanning segment. Topologically, residues 847–904 (DVPKDVVEKIKREKLMTIKIIHDFELNKLKENLDVEYGNIMKNVLVDEDNSLKAKTTV) are cytoplasmic.

Belongs to the anoctamin family. In terms of tissue distribution, highly expressed in skeletal muscle, bone tissues and thyroid gland.

It is found in the endoplasmic reticulum membrane. Its subcellular location is the cell membrane. Plays a role in plasma membrane repair in a process involving annexins. Does not exhibit calcium-activated chloride channel (CaCC) activity. The chain is Anoctamin-5 (Ano5) from Mus musculus (Mouse).